The following is a 388-amino-acid chain: Pepsin A-4 (388 aa).

The signal sequence occupies residues 1-15 (MKWLLLLGLVALSEC). A propeptide spans 16-62 (IMYKVPLIRKKSLRRTLSERGLLKDFLKKHNLNPARKYFPQWEAPTL) (activation peptide). Positions 76 to 385 (YFGTIGIGTP…DRANNQVGLA (310 aa)) constitute a Peptidase A1 domain. Residue D94 is part of the active site. C107 and C112 are disulfide-bonded. At S130 the chain carries Phosphoserine. C268 and C272 are oxidised to a cystine. The active site involves D277. A disulfide bridge connects residues C311 and C344.

It belongs to the peptidase A1 family.

The protein resides in the secreted. It catalyses the reaction Preferential cleavage: hydrophobic, preferably aromatic, residues in P1 and P1' positions. Cleaves 1-Phe-|-Val-2, 4-Gln-|-His-5, 13-Glu-|-Ala-14, 14-Ala-|-Leu-15, 15-Leu-|-Tyr-16, 16-Tyr-|-Leu-17, 23-Gly-|-Phe-24, 24-Phe-|-Phe-25 and 25-Phe-|-Tyr-26 bonds in the B chain of insulin.. Shows particularly broad specificity; although bonds involving phenylalanine and leucine are preferred, many others are also cleaved to some extent. The polypeptide is Pepsin A-4 (PGA4) (Homo sapiens (Human)).